A 757-amino-acid chain; its full sequence is Protein aardvark (757 aa).

Disordered regions lie at residues Ser-39 to Asn-63, Leu-122 to Leu-166, and Ser-256 to Ser-285. Residues Ile-121 to Ile-205 are a coiled coil. Composition is skewed to low complexity over residues Asn-125–Ser-164 and Ser-256–Asn-270. Residues Gln-310–Leu-356 form the F-box domain. ARM repeat units lie at residues Gly-454–Asn-498, Gly-506–Glu-548, Gly-549–Glu-591, Gly-592–Gln-634, Asn-635–Glu-678, and Gly-679–Gly-723.

The protein belongs to the beta-catenin family.

It is found in the cytoplasm. The protein resides in the cell junction. In terms of biological role, required to regulate pattern formation during multi-cellular stages of development and for the formation of adherens junctions. Plays a structural role during the regulation of stalk formation. Involved in cell signaling. Required for spore-cell differentiation. Overexpression increases number and size of cell junctions and reduces spore-cell formation. This is Protein aardvark (aarA) from Dictyostelium discoideum (Social amoeba).